The sequence spans 55 residues: Neurotoxin BmKX-A1-S31 (55 aa).

A signal peptide spans 1 to 23 (MKIFFAVLVILVLFSMLIWTAYG). 3 disulfides stabilise this stretch: C30–C45, C36–C50, and C39–C53.

As to expression, expressed by the venom gland.

It localises to the secreted. This Olivierus martensii (Manchurian scorpion) protein is Neurotoxin BmKX-A1-S31.